The chain runs to 325 residues: D-alanine--D-alanine ligase (325 aa).

Positions 109–309 (KRVCKERMLP…FCTLLDQLIE (201 aa)) constitute an ATP-grasp domain. 136-191 (CRRLPFPMFVKPANLGSSVGISKAHDEQELEAAFSLAKQYDRKIIVERGIEGRELE) contributes to the ATP binding site. Positions 262, 276, and 278 each coordinate Mg(2+).

This sequence belongs to the D-alanine--D-alanine ligase family. It depends on Mg(2+) as a cofactor. Mn(2+) serves as cofactor.

The protein resides in the cytoplasm. It carries out the reaction 2 D-alanine + ATP = D-alanyl-D-alanine + ADP + phosphate + H(+). It functions in the pathway cell wall biogenesis; peptidoglycan biosynthesis. In terms of biological role, cell wall formation. The polypeptide is D-alanine--D-alanine ligase (Solibacter usitatus (strain Ellin6076)).